The following is a 20-amino-acid chain: Cytotoxin drCT-1 (20 aa).

The protein belongs to the three-finger toxin family. Short-chain subfamily. Type IA cytotoxin sub-subfamily. Monomer in solution; Homodimer and oligomer in the presence of negatively charged lipids forming a pore with a size ranging between 20 and 30 Angstroms. In terms of tissue distribution, expressed by the venom gland.

It is found in the secreted. The protein resides in the target cell membrane. Its function is as follows. This three-finger cytotoxin has antiproliferative, cytotoxic and apoptotic activities. Both in vivo and in vitro experimental results suggests that this protein possess anticancer potential. Also shows neurotoxicity, cardiotoxicity and myotoxicity. The sequence is that of Cytotoxin drCT-1 from Daboia russelii (Russel's viper).